Consider the following 1376-residue polypeptide: METQLQSIFEDVVKTEVIEEAFAGMFMDSPEDEKTKLTSCLGAFRQFWSTLPQESHEQCVQWIVRFIHGQHSPKRIAFLYDCLAMAVETSLLPPRMVCQALISSDSLEWERTQLWALTFKLIRKIIGGVDYKGVRDLLKAVLDKIQTIPNFVSSAVVQQLLAAREVVEYILDRNACLLPAYFAVTEIRKLCPEGALSHWLLGSLISDFVDSFRPTARINSICGRCSLLPVVNNSGAICNSWKLDPTTLRFPLRGMLPYDKDLFDPQTGLLRYVLEQPYSRDMVCNMLGLNKQHKQRCPVLEDQLVDLVVYAMERSETEEQFDDGGTSQLLWQHLSSQLIFFVLFQFASFPHMVLSLHQKLAGRGLIKGRDHLMWVLLQFISGSIQKNALGDFLPVMKLFDLLYPEKECIPVPDINKPQSTHAFAMTCIWIHLNRKAQNDNSKLQIPIPHSLKLHHEFLQQSLRNKSLPMTDYKIALLCNAYSTNSECFTLPMGVLVETIYGNGSMRITLPGTNCMASGSVTPLPMNLLDSLTVHAKMSLIHSIATRVIKLAHAKSSLALAPALVETYSRLLVYMEIESLGIKGFISQLLPNVFKSHAWGILHTLLEMFSYRMHHIQPHYRVQLLSHLHSLAAVPQTNQNQLHLCVESTALRLITALGSSEVQPQFTRFLNDPKTVLSAESEELNRALILTLARATHVTDFFTGSDSIQGTWCKDILQTIMNFTPHNWASHTLSCFPAPLQAFFKQNNVPQESRFNLKKNVEEEYRKWKSMTNENDIITHFSMQGSPPLFLCLLWKMLLETDHINQIGFRVLERIGARALVAHVRTFADFLVYEFSTSAGGQQLNKCIEILNDMVWKYNIVTLDRLILCLAMRSHEGNEAQVCYFIIQLLLLKPNDFRNRVSDFVKENAPEHWLQSDWHTKHMTYHKKYPEKLYFEGLAEQVNPPIQLQSQYLPIYFGNVCLRFLPVFDIVIHRFLELLPVSKSLETLLDHLGGLYKFHDRPVTYLYNTLHYYERHLRDRTNLKRKLVHAIMSSLKDNRTPGWCLSETYLKCGMNAREDNVWIPDDTYYCKLIGRLVDTMAGKSPGPFPNCDWRFNEFPNPAAHALHVTCVELMALAVPGKDVGNALLNVVLKSQPLVPRENITAWMNAIGLVITALPEPYWIVLHDRIVSVISSAVLSSGSDWLGYPFQLLDFTACHQSYSEMHCSYVLALAHAVWHHSSIGQLSLIPKFLSEVLKPIVKTEFQLLYVYHLVGPFLQRFQQERTRCMLEIGVAFYEMLQAVDQHSNHLAYMDPICDFLYHIKYMFTGDSVKDQVERIICSLRPAMRLRLRFITHISKMEPAAVPVSNSSSVQQTSSASSPTAQSTAGAAIPLSVTQ.

A compositionally biased stretch (low complexity) spans 1346 to 1369 (SNSSSVQQTSSASSPTAQSTAGAA). The segment at 1346 to 1376 (SNSSSVQQTSSASSPTAQSTAGAAIPLSVTQ) is disordered.

The protein belongs to the Mediator complex subunit 23 family. As to quaternary structure, component of the Mediator complex.

The protein localises to the nucleus. Functionally, component of the Mediator complex, a coactivator involved in the regulated transcription of nearly all RNA polymerase II-dependent genes. Mediator functions as a bridge to convey information from gene-specific regulatory proteins to the basal RNA polymerase II transcription machinery. Mediator is recruited to promoters by direct interactions with regulatory proteins and serves as a scaffold for the assembly of a functional preinitiation complex with RNA polymerase II and the general transcription factors. The polypeptide is Mediator of RNA polymerase II transcription subunit 23 (med23) (Danio rerio (Zebrafish)).